The chain runs to 528 residues: Ceramide glucosyltransferase (528 aa).

The Lumenal portion of the chain corresponds to 1-6 (MYSFIE). A helical membrane pass occupies residues 7-27 (CIAGALFVLGCVVVTLVVIGV). Over 28-369 (RALLYNFRNR…TVLSATILEP (342 aa)) the chain is Cytoplasmic. Position 94 (D94) is a short sequence motif, D1. Position 154 (D154) is a short sequence motif, D2. Residue D308 is a short sequence motif, D3. The Proton acceptor role is filled by D308. Residues 349–353 (RRSRW) carry the (Q/R)XXRW motif. The helical transmembrane segment at 370–390 (FTECFLFATYMSLAMTTIPVL) threads the bilayer. The Lumenal segment spans residues 391–402 (SQNLGIPKTWNA). The chain crosses the membrane as a helical span at residues 403-423 (TAIAWFTITTLWMLIDYIGYL). Residues 424-457 (RLHSGVTMEVDEHTPYFAKGFKNTGGIKRRPFLE) are Cytoplasmic-facing. A helical transmembrane segment spans residues 458-478 (FLAAWIGREGLAFPVWAYAVV). The Lumenal segment spans residues 479–528 (FGNTVNWRGRLFYIHWDTTVDAVEPREERTREVRTPELERGPSRNKHRVD). The segment at 503–528 (PREERTREVRTPELERGPSRNKHRVD) is disordered.

The protein belongs to the glycosyltransferase 2 family.

The protein localises to the golgi apparatus membrane. It catalyses the reaction an N-acylsphing-4-enine + UDP-alpha-D-glucose = a beta-D-glucosyl-(1&lt;-&gt;1')-N-acylsphing-4-enine + UDP + H(+). It functions in the pathway lipid metabolism; sphingolipid metabolism. Its function is as follows. Catalyzes the final step in the biosynthesis of the membrane lipid glucosylceramide (GluCer), the transfer of glucose to ceramide. Glucosylceramides play important roles in growth, differentiation and pathogenicity. Contribution to fungal pathogenesis is host-dependent. The protein is Ceramide glucosyltransferase of Gibberella zeae (strain ATCC MYA-4620 / CBS 123657 / FGSC 9075 / NRRL 31084 / PH-1) (Wheat head blight fungus).